A 424-amino-acid polypeptide reads, in one-letter code: UDP-N-acetylglucosamine 1-carboxyvinyltransferase (424 aa).

Position 22–23 (22–23) interacts with phosphoenolpyruvate; the sequence is KN. Arginine 93 contributes to the UDP-N-acetyl-alpha-D-glucosamine binding site. Cysteine 117 serves as the catalytic Proton donor. The residue at position 117 (cysteine 117) is a 2-(S-cysteinyl)pyruvic acid O-phosphothioketal. UDP-N-acetyl-alpha-D-glucosamine-binding positions include 122–126, 162–165, aspartate 307, and isoleucine 329; these read RPVDL and KVSV.

This sequence belongs to the EPSP synthase family. MurA subfamily.

Its subcellular location is the cytoplasm. The catalysed reaction is phosphoenolpyruvate + UDP-N-acetyl-alpha-D-glucosamine = UDP-N-acetyl-3-O-(1-carboxyvinyl)-alpha-D-glucosamine + phosphate. It functions in the pathway cell wall biogenesis; peptidoglycan biosynthesis. Cell wall formation. Adds enolpyruvyl to UDP-N-acetylglucosamine. This Haemophilus influenzae (strain PittEE) protein is UDP-N-acetylglucosamine 1-carboxyvinyltransferase.